A 152-amino-acid chain; its full sequence is Ribosome maturation factor RimP (152 aa).

This sequence belongs to the RimP family.

The protein localises to the cytoplasm. In terms of biological role, required for maturation of 30S ribosomal subunits. This is Ribosome maturation factor RimP from Elusimicrobium minutum (strain Pei191).